A 453-amino-acid polypeptide reads, in one-letter code: Pup--protein ligase (453 aa).

Residue Glu-9 participates in Mg(2+) binding. Residue Arg-53 coordinates ATP. Tyr-55 contacts Mg(2+). The Proton acceptor role is filled by Asp-57. A Mg(2+)-binding site is contributed by Glu-63. ATP contacts are provided by Thr-66 and Trp-420.

Belongs to the Pup ligase/Pup deamidase family. Pup-conjugating enzyme subfamily.

The catalysed reaction is ATP + [prokaryotic ubiquitin-like protein]-L-glutamate + [protein]-L-lysine = ADP + phosphate + N(6)-([prokaryotic ubiquitin-like protein]-gamma-L-glutamyl)-[protein]-L-lysine.. It functions in the pathway protein degradation; proteasomal Pup-dependent pathway. It participates in protein modification; protein pupylation. Its function is as follows. Catalyzes the covalent attachment of the prokaryotic ubiquitin-like protein modifier Pup to the proteasomal substrate proteins, thereby targeting them for proteasomal degradation. This tagging system is termed pupylation. The ligation reaction involves the side-chain carboxylate of the C-terminal glutamate of Pup and the side-chain amino group of a substrate lysine. In Streptomyces avermitilis (strain ATCC 31267 / DSM 46492 / JCM 5070 / NBRC 14893 / NCIMB 12804 / NRRL 8165 / MA-4680), this protein is Pup--protein ligase.